The following is a 25-amino-acid chain: Flagellar filament core protein flaB3 (25 aa).

The protein belongs to the bacterial flagellin family. As to quaternary structure, the flagellum consists of an outer layer composed of two sheath proteins, flaA1 (44 kDa) and flaA2 (35 kDa) around a core that contains three proteins flaB1 (37 kDa), flaB2 (34 kDa) and flaB3 (32 kDa).

The protein resides in the periplasmic flagellum. Its subcellular location is the periplasm. Functionally, component of the core of the flagella. This chain is Flagellar filament core protein flaB3 (flaB3), found in Brachyspira hyodysenteriae (Treponema hyodysenteriae).